A 518-amino-acid polypeptide reads, in one-letter code: MIPDVSQALAWLEKHPQALKGIQRGLERETLRVNADGTLATTGHPEALGSALTHKWITTDFAEALLEFITPVDGDIQHMLTFMRDLHRYTARKLGDERMWPLSMPCYIAEGQDIELAQYGTSNTGRFKTLYREGLKNRYGALMQTISGVHYNFSLPMAFWQAKCGVTEGEAAKEKISAGYFRLIRNYYRFGWVIPYLFGASPAICSSFLQGKPTTLPFEKTDCGMYYLPYATSLRLSDLGYTNKSQSNLGITFNDLHEYVAGLKRAIKTPSEEYARIGVEKDGKRLQINSNVLQIENELYAPIRPKRVTRSGESPSDALLRGGIEYIEVRSLDINPFSPIGVDEQQLRFLDLFMVWCVLADAPEMSSDELLCTRTNWNRVILEGRKPGLTLGIGCETAQFPLPKVGKDLFRDLKRVAQTLDSIHGGEEYQKVCDELVACFDNPELTFSARILRSMIDEGIGGTGKAFGEAYRNLLREEPLEILQEEEFIAERDASVRRQQEIEAADTEPFAAWLAKHA.

It belongs to the glutamate--cysteine ligase type 1 family. Type 1 subfamily.

It catalyses the reaction L-cysteine + L-glutamate + ATP = gamma-L-glutamyl-L-cysteine + ADP + phosphate + H(+). Its pathway is sulfur metabolism; glutathione biosynthesis; glutathione from L-cysteine and L-glutamate: step 1/2. This is Glutamate--cysteine ligase from Salmonella paratyphi C (strain RKS4594).